We begin with the raw amino-acid sequence, 281 residues long: Elongation factor Ts (281 aa).

Positions 80 to 83 (TDFV) are involved in Mg(2+) ion dislocation from EF-Tu.

Belongs to the EF-Ts family.

It is found in the cytoplasm. Functionally, associates with the EF-Tu.GDP complex and induces the exchange of GDP to GTP. It remains bound to the aminoacyl-tRNA.EF-Tu.GTP complex up to the GTP hydrolysis stage on the ribosome. The chain is Elongation factor Ts from Aliivibrio fischeri (strain MJ11) (Vibrio fischeri).